A 1147-amino-acid polypeptide reads, in one-letter code: ATP-dependent helicase/deoxyribonuclease subunit B (1147 aa).

Position 8 to 15 (G8 to S15) interacts with ATP. C780, C1092, C1095, and C1101 together coordinate [4Fe-4S] cluster.

This sequence belongs to the helicase family. AddB/RexB type 1 subfamily. In terms of assembly, heterodimer of AddA and AddB. Mg(2+) is required as a cofactor. It depends on [4Fe-4S] cluster as a cofactor.

The heterodimer acts as both an ATP-dependent DNA helicase and an ATP-dependent, dual-direction single-stranded exonuclease. Recognizes the chi site generating a DNA molecule suitable for the initiation of homologous recombination. The AddB subunit has 5' -&gt; 3' nuclease activity but not helicase activity. This is ATP-dependent helicase/deoxyribonuclease subunit B from Lachnoclostridium phytofermentans (strain ATCC 700394 / DSM 18823 / ISDg) (Clostridium phytofermentans).